An 84-amino-acid chain; its full sequence is UPF0473 protein CKL_1327 (84 aa).

Belongs to the UPF0473 family.

This chain is UPF0473 protein CKL_1327, found in Clostridium kluyveri (strain ATCC 8527 / DSM 555 / NBRC 12016 / NCIMB 10680 / K1).